The following is a 131-amino-acid chain: RutC family protein YjgH (131 aa).

The protein belongs to the RutC family.

The polypeptide is RutC family protein YjgH (yjgH) (Escherichia coli (strain K12)).